A 187-amino-acid polypeptide reads, in one-letter code: Elongation factor P (187 aa).

The protein belongs to the elongation factor P family.

It is found in the cytoplasm. It participates in protein biosynthesis; polypeptide chain elongation. Involved in peptide bond synthesis. Stimulates efficient translation and peptide-bond synthesis on native or reconstituted 70S ribosomes in vitro. Probably functions indirectly by altering the affinity of the ribosome for aminoacyl-tRNA, thus increasing their reactivity as acceptors for peptidyl transferase. This is Elongation factor P from Nocardia farcinica (strain IFM 10152).